The following is a 67-amino-acid chain: Conotoxin Cl14.2b (67 aa).

Residues 1 to 20 (MNVTVMFLVLLLLTMPLTDG) form the signal peptide. Positions 21-48 (FNIRATNGGELFGPVQRDAGNVLDHGFQ) are excised as a propeptide.

The protein belongs to the conotoxin L superfamily. In terms of processing, contains 2 disulfide bonds. Expressed by the venom duct.

It is found in the secreted. Functionally, increases calcium current amplitude through Cav1.2/Cav1.3 channels in rat pancreatic beta-cells, which is a prerequisite for eliciting insulin secretion. Stimulates insulin secretion in NIT-1 insulinoma cell lines. In vivo, significantly decreases mice blood glucose levels as of 45 minutes after treatment, similarly to insulin treatment. Has a potential therapeutic use in endocrinal pathologies such as early stages of type 2 diabetes where the pancreas's capability to produce insulin is still effective. This is Conotoxin Cl14.2b from Californiconus californicus (California cone).